Reading from the N-terminus, the 165-residue chain is Hydroxyproline-rich systemin A (165 aa).

An N-terminal signal peptide occupies residues M1–A18. The propeptide occupies R19–G35. Disordered stretches follow at residues G33–N70 and Y142–Y165. Residues P42, P43, P45, P49, and P50 each carry the 4-hydroxyproline modification. O-linked (Ara...) hydroxyproline glycans are attached at residues P42, P43, P45, P49, and P50. Positions V54–W143 are excised as a propeptide. P150, P151, and P153 each carry 4-hydroxyproline. 3 O-linked (Ara...) hydroxyproline glycosylation sites follow: P150, P151, and P153. A propeptide spanning residues L162–Y165 is cleaved from the precursor.

In terms of processing, O-glycosylated; contains pentose side chains. As to expression, expressed in leaves.

The protein resides in the secreted. Functionally, activates a lipid-based signal transduction pathway in which linolenic acid is converted to jasmonic acid, a potent activator of defense gene transcription, including proteinase inhibitors. This chain is Hydroxyproline-rich systemin A, found in Nicotiana tabacum (Common tobacco).